A 453-amino-acid chain; its full sequence is DNA repair protein RadA (453 aa).

A C4-type zinc finger spans residues 10–27 (CQECGYQSPKYLGRCPNC). 95-102 (GDPGIGKS) serves as a coordination point for ATP. Residues 251–255 (KNRFG) carry the RadA KNRFG motif motif. Residues 350 to 453 (DAYLKSAGGV…VGQVLKAVFS (104 aa)) form a lon-protease-like region.

The protein belongs to the RecA family. RadA subfamily.

Functionally, DNA-dependent ATPase involved in processing of recombination intermediates, plays a role in repairing DNA breaks. Stimulates the branch migration of RecA-mediated strand transfer reactions, allowing the 3' invading strand to extend heteroduplex DNA faster. Binds ssDNA in the presence of ADP but not other nucleotides, has ATPase activity that is stimulated by ssDNA and various branched DNA structures, but inhibited by SSB. Does not have RecA's homology-searching function. This Streptococcus pyogenes serotype M3 (strain ATCC BAA-595 / MGAS315) protein is DNA repair protein RadA.